Consider the following 133-residue polypeptide: Small ribosomal subunit protein eS8 (133 aa).

Residues 1–34 (MGVWHGRSLRKPTGGRIRPHRKKRKFEMGNPPTE) are disordered.

This sequence belongs to the eukaryotic ribosomal protein eS8 family. In terms of assembly, part of the 30S ribosomal subunit.

This chain is Small ribosomal subunit protein eS8, found in Methanopyrus kandleri (strain AV19 / DSM 6324 / JCM 9639 / NBRC 100938).